A 405-amino-acid chain; its full sequence is Serpin I2 (405 aa).

The first 18 residues, 1–18, serve as a signal peptide directing secretion; that stretch reads MDTIFLWSLLLLFFGSQA. N202, N207, and N306 each carry an N-linked (GlcNAc...) asparagine glycan.

Belongs to the serpin family. In terms of tissue distribution, expressed in pancreas and adipose tissues.

The protein resides in the secreted. The sequence is that of Serpin I2 (SERPINI2) from Homo sapiens (Human).